The primary structure comprises 287 residues: 4-hydroxybenzoate octaprenyltransferase (287 aa).

8 consecutive transmembrane segments (helical) span residues 23-43, 46-66, 99-119, 141-161, 162-182, 213-233, 237-257, and 266-286; these read IGSLLLLWPTYWALWLAGGTA, GKLLLVFTCGVFFMRAAGCVI, LFVLLVGLSFALVLTLNAMTI, LPQVILGMAFGWSIPMAYAAV, GESLPLSCWLLFAANICWTVA, LVIGLLQLATLLLLLWVGDLN, GAYYWGVLLAAVLFVYQQQLI, and FRAFMNNNYVGLILFLGILLA.

It belongs to the UbiA prenyltransferase family. Mg(2+) serves as cofactor.

The protein resides in the cell inner membrane. The catalysed reaction is all-trans-octaprenyl diphosphate + 4-hydroxybenzoate = 4-hydroxy-3-(all-trans-octaprenyl)benzoate + diphosphate. The protein operates within cofactor biosynthesis; ubiquinone biosynthesis. Functionally, catalyzes the prenylation of para-hydroxybenzoate (PHB) with an all-trans polyprenyl group. Mediates the second step in the final reaction sequence of ubiquinone-8 (UQ-8) biosynthesis, which is the condensation of the polyisoprenoid side chain with PHB, generating the first membrane-bound Q intermediate 3-octaprenyl-4-hydroxybenzoate. The chain is 4-hydroxybenzoate octaprenyltransferase from Edwardsiella ictaluri (strain 93-146).